Here is a 640-residue protein sequence, read N- to C-terminus: Putative solute carrier organic anion transporter family member 1B7 (640 aa).

At 1–16 (MKISTTQIERRFEISS) the chain is on the extracellular side. Residues 17–37 (SLVGLIDGSFEIGNLFVIVFV) form a helical membrane-spanning segment. The Cytoplasmic portion of the chain corresponds to 38–49 (SYFGSKLHRPKL). A helical membrane pass occupies residues 50-70 (IGIGCFLMGTGSILMALPHFF). Topologically, residues 71–123 (MGYYRYSKETNIDPSENSTSNLPNCLINQMLSLNRTPSEIIERGCVKESGSHM) are extracellular. A helical membrane pass occupies residues 124–144 (WIYVFMGNMLRGIGETPIVPL). Residues 145 to 159 (GISYIDDFAKEGHSS) lie on the Cytoplasmic side of the membrane. A helical transmembrane segment spans residues 160 to 180 (LYLGTVNVMGMTGLVFAFMLG). Residues 181-211 (SLFAKMYVDIGYVDLSTIRITPKDSRWVGAW) lie on the Extracellular side of the membrane. A helical membrane pass occupies residues 212 to 232 (WLGFLVSGIVSIISSIPFFFL). Residues 233-292 (PLNPNKPQKERKVSLFLHVLKTNDKRNQIANLTNRRKYITKNVTGFFQSLKSILTNPLYV) lie on the Cytoplasmic side of the membrane. At serine 246 the chain carries Phosphoserine. The chain crosses the membrane as a helical span at residues 293–313 (IFVIFTLLHMSSYIASLTYII). Residues 314–329 (KMVEQQYGWSASKTNF) are Extracellular-facing. A helical membrane pass occupies residues 330 to 350 (LLGVLALPAVAIGMFSGGYII). The Cytoplasmic segment spans residues 351–362 (KKFKLSLVGLAK). A helical membrane pass occupies residues 363–383 (LAFCSATVHLLSQVLYFFLIC). Over 384–492 (ESKSVAGLTL…CTRKSYVYFV (109 aa)) the chain is Extracellular. A Kazal-like domain is found at 406–461 (DVPLSYCNSECNCDESQWEPVCGNNGITYLSPCLAGCKSSSGNKEPIVFYNCSCVE). 3 disulfide bridges follow: cysteine 412–cysteine 442, cysteine 418–cysteine 438, and cysteine 427–cysteine 459. The chain crosses the membrane as a helical span at residues 493-513 (IQVLDAFLCAVGLTSYSVLVI). Residues 514-521 (RIVQPELK) are Cytoplasmic-facing. A helical membrane pass occupies residues 522-542 (ALAIGFHSMIMRSLGGILVPI). The Extracellular portion of the chain corresponds to 543-577 (YFGALIDTTCMKWSTNSCGARGACRIYNSTYLGRA). The chain crosses the membrane as a helical span at residues 578 to 598 (FFGLKVALIFPVLVLLTVFIF). Topologically, residues 599–640 (VVRKKSHGKDTKVLENERQVMDEANLEFLNDSEHFVPSAEEQ) are cytoplasmic. Phosphoserine is present on serine 636.

The protein belongs to the organo anion transporter (TC 2.A.60) family.

It localises to the cell membrane. The chain is Putative solute carrier organic anion transporter family member 1B7 (SLCO1B7) from Homo sapiens (Human).